The sequence spans 365 residues: Carbamoyl phosphate synthase small chain (365 aa).

CPSase stretches follow at residues 1–166 and 1–169; these read MKRQ…PSPG and MKRQ…GRGH. L-glutamine-binding residues include Ser-45, Gly-218, and Gly-220. The region spanning 170–357 is the Glutamine amidotransferase type-1 domain; it reads RVVLVDFGMK…LTMIENFKKE (188 aa). Catalysis depends on Cys-245, which acts as the Nucleophile. Positions 246, 249, 287, 289, and 290 each coordinate L-glutamine. Catalysis depends on residues His-330 and Glu-332.

This sequence belongs to the CarA family. As to quaternary structure, composed of two chains; the small (or glutamine) chain promotes the hydrolysis of glutamine to ammonia, which is used by the large (or ammonia) chain to synthesize carbamoyl phosphate. Tetramer of heterodimers (alpha,beta)4.

The enzyme catalyses hydrogencarbonate + L-glutamine + 2 ATP + H2O = carbamoyl phosphate + L-glutamate + 2 ADP + phosphate + 2 H(+). The catalysed reaction is L-glutamine + H2O = L-glutamate + NH4(+). It functions in the pathway amino-acid biosynthesis; L-arginine biosynthesis; carbamoyl phosphate from bicarbonate: step 1/1. The protein operates within pyrimidine metabolism; UMP biosynthesis via de novo pathway; (S)-dihydroorotate from bicarbonate: step 1/3. Functionally, small subunit of the glutamine-dependent carbamoyl phosphate synthetase (CPSase). CPSase catalyzes the formation of carbamoyl phosphate from the ammonia moiety of glutamine, carbonate, and phosphate donated by ATP, constituting the first step of 2 biosynthetic pathways, one leading to arginine and/or urea and the other to pyrimidine nucleotides. The small subunit (glutamine amidotransferase) binds and cleaves glutamine to supply the large subunit with the substrate ammonia. This chain is Carbamoyl phosphate synthase small chain, found in Bacillus cereus (strain ATCC 14579 / DSM 31 / CCUG 7414 / JCM 2152 / NBRC 15305 / NCIMB 9373 / NCTC 2599 / NRRL B-3711).